The following is a 148-amino-acid chain: UPF0178 protein Mlg_1612 (148 aa).

The protein belongs to the UPF0178 family.

The polypeptide is UPF0178 protein Mlg_1612 (Alkalilimnicola ehrlichii (strain ATCC BAA-1101 / DSM 17681 / MLHE-1)).